The sequence spans 426 residues: Serine--tRNA ligase (426 aa).

Positions 1-15 (MIDVKDLSENPDKFR) are enriched in basic and acidic residues. The segment at 1 to 22 (MIDVKDLSENPDKFRASQRARG) is disordered. 228 to 230 (TSE) contributes to the L-serine binding site. Residues 259-261 (RRE) and Val275 contribute to the ATP site. An L-serine-binding site is contributed by Glu282. 346-349 (ELTS) contributes to the ATP binding site. Thr386 lines the L-serine pocket.

It belongs to the class-II aminoacyl-tRNA synthetase family. Type-1 seryl-tRNA synthetase subfamily. Homodimer. The tRNA molecule binds across the dimer.

It is found in the cytoplasm. The enzyme catalyses tRNA(Ser) + L-serine + ATP = L-seryl-tRNA(Ser) + AMP + diphosphate + H(+). The catalysed reaction is tRNA(Sec) + L-serine + ATP = L-seryl-tRNA(Sec) + AMP + diphosphate + H(+). The protein operates within aminoacyl-tRNA biosynthesis; selenocysteinyl-tRNA(Sec) biosynthesis; L-seryl-tRNA(Sec) from L-serine and tRNA(Sec): step 1/1. In terms of biological role, catalyzes the attachment of serine to tRNA(Ser). Is also able to aminoacylate tRNA(Sec) with serine, to form the misacylated tRNA L-seryl-tRNA(Sec), which will be further converted into selenocysteinyl-tRNA(Sec). In Pseudarthrobacter chlorophenolicus (strain ATCC 700700 / DSM 12829 / CIP 107037 / JCM 12360 / KCTC 9906 / NCIMB 13794 / A6) (Arthrobacter chlorophenolicus), this protein is Serine--tRNA ligase.